The primary structure comprises 94 residues: Pyrimidine/purine nucleoside phosphorylase (94 aa).

Belongs to the nucleoside phosphorylase PpnP family.

The catalysed reaction is a purine D-ribonucleoside + phosphate = a purine nucleobase + alpha-D-ribose 1-phosphate. It carries out the reaction adenosine + phosphate = alpha-D-ribose 1-phosphate + adenine. It catalyses the reaction cytidine + phosphate = cytosine + alpha-D-ribose 1-phosphate. The enzyme catalyses guanosine + phosphate = alpha-D-ribose 1-phosphate + guanine. The catalysed reaction is inosine + phosphate = alpha-D-ribose 1-phosphate + hypoxanthine. It carries out the reaction thymidine + phosphate = 2-deoxy-alpha-D-ribose 1-phosphate + thymine. It catalyses the reaction uridine + phosphate = alpha-D-ribose 1-phosphate + uracil. The enzyme catalyses xanthosine + phosphate = alpha-D-ribose 1-phosphate + xanthine. Functionally, catalyzes the phosphorolysis of diverse nucleosides, yielding D-ribose 1-phosphate and the respective free bases. Can use uridine, adenosine, guanosine, cytidine, thymidine, inosine and xanthosine as substrates. Also catalyzes the reverse reactions. This chain is Pyrimidine/purine nucleoside phosphorylase, found in Aeromonas hydrophila subsp. hydrophila (strain ATCC 7966 / DSM 30187 / BCRC 13018 / CCUG 14551 / JCM 1027 / KCTC 2358 / NCIMB 9240 / NCTC 8049).